The sequence spans 291 residues: Elongation factor Ts (291 aa).

The involved in Mg(2+) ion dislocation from EF-Tu stretch occupies residues 79–82 (TDFV).

The protein belongs to the EF-Ts family.

The protein localises to the cytoplasm. Associates with the EF-Tu.GDP complex and induces the exchange of GDP to GTP. It remains bound to the aminoacyl-tRNA.EF-Tu.GTP complex up to the GTP hydrolysis stage on the ribosome. The chain is Elongation factor Ts from Leuconostoc mesenteroides subsp. mesenteroides (strain ATCC 8293 / DSM 20343 / BCRC 11652 / CCM 1803 / JCM 6124 / NCDO 523 / NBRC 100496 / NCIMB 8023 / NCTC 12954 / NRRL B-1118 / 37Y).